The sequence spans 1211 residues: RNA helicase Mov10l1 (1211 aa).

2 disordered regions span residues 340–385 (KENS…GENG) and 674–710 (WNHA…RVGD). 2 stretches are compositionally biased toward polar residues: residues 345–372 (DENI…NNRG) and 674–688 (WNHA…QSTS). Positions 694 to 710 (TMTDQAEHGTEERRVGD) are enriched in basic and acidic residues. 770–777 (GPPGTGKT) is a binding site for ATP. The DEAG box signature appears at 886–889 (DEAG). The tract at residues 1192-1211 (DPSYPVVPESTGPEKHQEPS) is disordered.

This sequence belongs to the DNA2/NAM7 helicase family. SDE3 subfamily. In terms of assembly, interacts with PIWIL1. Interacts with PIWIL2. Interacts with PIWIL4. Interacts with HSPA2. Interacts with PLD6. As to expression, specifically expressed in testis.

It localises to the cytoplasm. The catalysed reaction is ATP + H2O = ADP + phosphate + H(+). Functionally, ATP-dependent RNA helicase required during spermatogenesis to repress transposable elements and prevent their mobilization, which is essential for germline integrity. Acts via the piRNA metabolic process, which mediates the repression of transposable elements during meiosis by forming complexes composed of piRNAs and Piwi proteins and governs the methylation and subsequent repression of transposons. Involved in the primary piRNA metabolic process. Specifically binds to piRNA precursors and promotes the generation of intermediate piRNA processing fragments that are subsequently loaded to Piwi proteins. Acts via its ATP-dependent RNA helicase activity: displays 5'-3' RNA unwinding activity and probably mediates unwinding and funneling of single-stranded piRNA precursor transcripts to the endonuclease that catalyzes the first cleavage step of piRNA processing to generate piRNA intermediate fragments that are subsequently loaded to Piwi proteins. This Homo sapiens (Human) protein is RNA helicase Mov10l1.